The sequence spans 180 residues: CASP-like protein 5A1 (180 aa).

The Cytoplasmic portion of the chain corresponds to 1-36 (MEVSHPAVHPVAVPPVLTEPPARVRMKDYQGMPGTL). Residues 37 to 57 (GGLALRLGQLGFAVLSFSIMV) form a helical membrane-spanning segment. At 58-67 (STPDFSQVTA) the chain is on the extracellular side. A helical membrane pass occupies residues 68 to 88 (FCYLVAATVLQTLWSSITAVV). Over 89 to 102 (DIYALSVRRSLHHS) the chain is Cytoplasmic. The helical transmembrane segment at 103-123 (LLVGLFAVGDGVTSTLTFAAA) threads the bilayer. Residues 124-150 (CATAGITVLIDNDLDECGQNHCGRFEA) lie on the Extracellular side of the membrane. Residues 151 to 171 (AAAMAFLSWIMAAPSFLLAFW) traverse the membrane as a helical segment. The Cytoplasmic segment spans residues 172 to 180 (SFGNKIVCF).

The protein belongs to the Casparian strip membrane proteins (CASP) family. As to quaternary structure, homodimer and heterodimers.

It localises to the cell membrane. This Pteridium aquilinum subsp. aquilinum (Bracken fern) protein is CASP-like protein 5A1.